A 147-amino-acid chain; its full sequence is Lysozyme C (147 aa).

A signal peptide spans 1 to 18 (MKFFLILGFCLLPLIAQG). In terms of domain architecture, C-type lysozyme spans 19–147 (KVFQRCELAA…VSQWIRGCRV (129 aa)). 4 cysteine pairs are disulfide-bonded: Cys-24–Cys-145, Cys-48–Cys-133, Cys-82–Cys-98, and Cys-94–Cys-112. Catalysis depends on residues Glu-53 and Asp-70. Asp-119 contacts substrate.

Belongs to the glycosyl hydrolase 22 family. As to quaternary structure, monomer. In terms of tissue distribution, expressed in liver and ovary. Not expressed in bone marrow, lung, spleen, intestine or oviduct.

The protein localises to the secreted. The enzyme catalyses Hydrolysis of (1-&gt;4)-beta-linkages between N-acetylmuramic acid and N-acetyl-D-glucosamine residues in a peptidoglycan and between N-acetyl-D-glucosamine residues in chitodextrins.. Its function is as follows. Lysozymes have primarily a bacteriolytic function; those in tissues and body fluids are associated with the monocyte-macrophage system and enhance the activity of immunoagents. Has bacteriolytic activity against M.luteus. This Dromaius novaehollandiae (Emu) protein is Lysozyme C.